The sequence spans 432 residues: Probable M18 family aminopeptidase 2 (432 aa).

Zn(2+) contacts are provided by histidine 86, histidine 157, and histidine 408.

It belongs to the peptidase M18 family. It depends on Zn(2+) as a cofactor.

The protein is Probable M18 family aminopeptidase 2 of Streptomyces avermitilis (strain ATCC 31267 / DSM 46492 / JCM 5070 / NBRC 14893 / NCIMB 12804 / NRRL 8165 / MA-4680).